A 490-amino-acid polypeptide reads, in one-letter code: Cytochrome P450 2C38 (490 aa).

The first 20 residues, 1–20, serve as a signal peptide directing secretion; it reads MDLVTFLVLTLSSLILLSLW. C435 is a binding site for heme.

The protein belongs to the cytochrome P450 family. Heme is required as a cofactor. Liver, brain, kidney, and intestine, with trace amounts in lung and heart.

The protein localises to the endoplasmic reticulum membrane. It is found in the microsome membrane. The catalysed reaction is an organic molecule + reduced [NADPH--hemoprotein reductase] + O2 = an alcohol + oxidized [NADPH--hemoprotein reductase] + H2O + H(+). It carries out the reaction (5Z,8Z,11Z,14Z)-eicosatetraenoate + reduced [NADPH--hemoprotein reductase] + O2 = 11,12-epoxy-(5Z,8Z,14Z)-eicosatrienoate + oxidized [NADPH--hemoprotein reductase] + H2O + H(+). It participates in lipid metabolism; arachidonate metabolism. Its function is as follows. A cytochrome P450 monooxygenase that primarily catalyzes the epoxidation of 11,12 double bond of (5Z,8Z,11Z,14Z)-eicosatetraenoic acid (arachidonate) forming 11,12-epoxyeicosatrienoic acid (11,12-EET) regioisomer. Mechanistically, uses molecular oxygen inserting one oxygen atom into a substrate, and reducing the second into a water molecule, with two electrons provided by NADPH via cytochrome P450 reductase (CPR; NADPH--hemoprotein reductase). This Mus musculus (Mouse) protein is Cytochrome P450 2C38.